We begin with the raw amino-acid sequence, 176 residues long: Late lactation protein (176 aa).

The N-terminal stretch at M1 to A18 is a signal peptide. C78 and C171 form a disulfide bridge.

It belongs to the calycin superfamily. Lipocalin family. As to expression, mammary gland. Secreted in milk.

The protein localises to the secreted. Its function is as follows. Probably serves a role in the transport of a small ligand released during the hydrolysis of milk fat. In Trichosurus vulpecula (Brush-tailed possum), this protein is Late lactation protein.